The sequence spans 328 residues: uncharacterized protein (328 aa).

S170 carries the post-translational modification Phosphoserine.

It localises to the cytoplasm. The protein resides in the nucleus. This is an uncharacterized protein from Schizosaccharomyces pombe (strain 972 / ATCC 24843) (Fission yeast).